Reading from the N-terminus, the 877-residue chain is EF-hand domain-containing family member B (877 aa).

Disordered regions lie at residues 1 to 47 and 268 to 290; these read MCSF…GRKS and AQQP…PDRI. EF-hand domains lie at 605-640 and 641-676; these read QNFD…ACLH and LDEK…KDKT. Ca(2+) is bound by residues D618, D622, E629, D654, D656, D658, and E665.

Microtubule inner protein component of sperm flagellar doublet microtubules. Interacts with STIM1 and ORAI1; the interactions take place upon Ca(2+)-store depletion and dissociate through a Ca(2+)-dependent mechanism. Interaction with STIM1 inhibits STIM1 interaction with SARAF. In terms of tissue distribution, expressed in trachea multiciliated cells.

It is found in the cytoplasm. It localises to the cytoskeleton. The protein localises to the cilium axoneme. The protein resides in the flagellum axoneme. Its function is as follows. Microtubule inner protein (MIP) part of the dynein-decorated doublet microtubules (DMTs) in cilia axoneme, which is required for motile cilia beating. Cytosolic sensor for calcium, modulates the interaction of STIM1 and ORAI1 upon store depletion and the activation of store-operated Ca(2+) entry (SOCE) and NFAT translocation from cytosol to nucleus. The polypeptide is EF-hand domain-containing family member B (Bos taurus (Bovine)).